Consider the following 231-residue polypeptide: Claudin-10 (231 aa).

A helical transmembrane segment spans residues 1 to 21; sequence MASTALEIVAFVVSISGWVLV. The Extracellular portion of the chain corresponds to 22–80; sequence SSTLPTDYWKVSTIDGTVITTATYFANLWKICVTDSTGVANCKEFPSMLALDGYIQACR. The helical transmembrane segment at 81–101 threads the bilayer; sequence GLMIAAVSLGFFGSIFALFGM. At 102-115 the chain is on the cytoplasmic side; sequence KCTKVGGSDQAKAK. A helical transmembrane segment spans residues 116–136; it reads IACLAGIVFILSGLCSMTGCS. Over 137–160 the chain is Extracellular; it reads LYANKITTEFFDPLYMEQKYELGA. A helical membrane pass occupies residues 161-181; the sequence is ALFIGWAGASLCIIGGVIFCF. The Cytoplasmic segment spans residues 182 to 231; that stretch reads SISDNNKTPRMGYTYNGPTSAMSSRTKYQGGEGDFKTTGPSKQFDKNAYV.

The protein belongs to the claudin family. In terms of assembly, can form homodimers both in trans (interaction between CLDN10 molecules in opposing membranes) and in cis (interaction between CLDN10 molecules within one membrane). Interacts with CLDN19. Widely expressed, with highest expression detected in brain cortex, kidney and lung. In kidney, the expression is highest in medulla, with transcripts being detected in medullary thick ascending limb of Henle's loop (mTAL) and outer and inner medullary collecting ducts. Expressed in salivary glands and skin. As to expression, detected in kidney with transcripts being detected in PCT, mTAL and cortical collecting duct. Detected in uterus. Expressed in proximal tubules (at protein level). In terms of tissue distribution, only detected in kidney and uterus. Detected in kidney with transcripts being detected in PCT, mTAL and cortical collecting duct. Detected in uterus. As to expression, expressed in the inner ear where it is detected in organ of Corti, marginal cells of stria vascularis, Reissner's membrane and spiral limbus (at protein level).

It localises to the cell junction. The protein localises to the tight junction. It is found in the cell membrane. The protein resides in the endoplasmic reticulum. It carries out the reaction Na(+)(in) = Na(+)(out). The catalysed reaction is Li(+)(in) = Li(+)(out). It catalyses the reaction K(+)(in) = K(+)(out). The enzyme catalyses Rb(+)(in) = Rb(+)(out). It carries out the reaction Cs(+)(in) = Cs(+)(out). The catalysed reaction is NH4(+)(in) = NH4(+)(out). It catalyses the reaction methylamine(out) = methylamine(in). The enzyme catalyses Mg(2+)(in) = Mg(2+)(out). It carries out the reaction Ca(2+)(in) = Ca(2+)(out). The catalysed reaction is Sr(2+)(in) = Sr(2+)(out). It catalyses the reaction chloride(in) = chloride(out). The enzyme catalyses nitrate(in) = nitrate(out). Its function is as follows. Forms paracellular channels: polymerizes in tight junction strands with cation- and anion-selective channels through the strands, conveying epithelial permeability in a process known as paracellular tight junction permeability. In terms of biological role, forms cation-selective paracellular channels. In sweat glands and in the thick ascending limb (TAL) of Henle's loop in kidney, it controls paracellular sodium permeability which is essential for proper sweat production and renal function. Functionally, forms anion-selective paracellular channels. In renal proximal tubules, it conveys selective chloride over hydrogencarbonate anion permeability which is required for renal chloride reabsorption and salt homeostasis. This is Claudin-10 from Mus musculus (Mouse).